The chain runs to 105 residues: MKNKIKIRLKSFDHRSLDQATKEIVSAVKRTFANINGPIPLPKKIGRFTVNRSPHVHKKSREQFEIRTHKRLLVIDDPNPAVVDALSKVDLAAGVDVVIELESGE.

The protein belongs to the universal ribosomal protein uS10 family. In terms of assembly, part of the 30S ribosomal subunit.

Its function is as follows. Involved in the binding of tRNA to the ribosomes. This is Small ribosomal subunit protein uS10 from Rickettsia peacockii (strain Rustic).